Here is a 229-residue protein sequence, read N- to C-terminus: MAQKSKAYRAAAEKIEAGKYYTPTEAVALAKETGSAKFNSTVEVALKLGVDPRKADQMVRGTVILPHGTGKTARVIVFATGPAAEAAIAAGADEVGGSDLIEKVAGGYTDFDSAVSTPELMGQVGRLGKVLGPRGLMPNPKTGTVTPDVAKAVFDIKGGKIEFRVDKHANVHFVVGKAGFTADQLNDNIKVALDEVVRLKPSAAKGRYIQKGAVSTTFGPGIPLDVNAI.

It belongs to the universal ribosomal protein uL1 family. In terms of assembly, part of the 50S ribosomal subunit.

In terms of biological role, binds directly to 23S rRNA. The L1 stalk is quite mobile in the ribosome, and is involved in E site tRNA release. Protein L1 is also a translational repressor protein, it controls the translation of the L11 operon by binding to its mRNA. In Leifsonia xyli subsp. xyli (strain CTCB07), this protein is Large ribosomal subunit protein uL1.